The sequence spans 485 residues: uncharacterized protein (485 aa).

Residues 1-30 (MFSWANIGSNEYLPLKNDRKAYLNQWAKRS) are Cytoplasmic-facing. Residues 31–51 (GLAIAAICILGILILAIVKLF) form a helical membrane-spanning segment. The Extracellular portion of the chain corresponds to 52-485 (CFKAIIFPIV…DIEQAYSKLI (434 aa)). Asn67 carries N-linked (GlcNAc...) asparagine glycosylation. Residues 74-404 (STVIVISLDG…YEPLGVHGYD (331 aa)) are phosphodiesterase. Residue Thr118 is the Nucleophile of the active site. N-linked (GlcNAc...) asparagine glycosylation is found at Asn306, Asn338, Asn453, and Asn467.

Belongs to the nucleotide pyrophosphatase/phosphodiesterase family.

It is found in the membrane. This is an uncharacterized protein from Schizosaccharomyces pombe (strain 972 / ATCC 24843) (Fission yeast).